Here is a 397-residue protein sequence, read N- to C-terminus: Elongation factor Tu-1 (397 aa).

The region spanning 10–206 (KPHVNIGTIG…AVDEAIPEPE (197 aa)) is the tr-type G domain. The interval 19 to 26 (GHIDHGKT) is G1. 19–26 (GHIDHGKT) lines the GTP pocket. Thr-26 serves as a coordination point for Mg(2+). Residues 62–66 (GITIS) form a G2 region. The tract at residues 83 to 86 (DCPG) is G3. GTP is bound by residues 83–87 (DCPGH) and 138–141 (NKAD). Residues 138–141 (NKAD) are G4. Residues 176-178 (SAL) are G5.

It belongs to the TRAFAC class translation factor GTPase superfamily. Classic translation factor GTPase family. EF-Tu/EF-1A subfamily. As to quaternary structure, monomer.

Its subcellular location is the cytoplasm. The catalysed reaction is GTP + H2O = GDP + phosphate + H(+). Its function is as follows. GTP hydrolase that promotes the GTP-dependent binding of aminoacyl-tRNA to the A-site of ribosomes during protein biosynthesis. This Streptomyces coelicolor (strain ATCC BAA-471 / A3(2) / M145) protein is Elongation factor Tu-1.